Reading from the N-terminus, the 1061-residue chain is Protein pid-5 (1061 aa).

It belongs to the peptidase M24B family. As to quaternary structure, may interact with pid-2, app-1 and prmt-5.

It is found in the cytoplasm. It localises to the perinuclear region. The protein localises to the P-body. In terms of biological role, together with pid-4, it is involved in gene silencing mediated by a class of 21 nucleotide PIWI-interacting RNAs (piRNAs) that possess a uracil residue at the 5'-end (also called 21U-RNAs) and guide the Piwi protein prg-1 to its DNA targets for silencing. Together with pid-4, it is required for the biogenesis of secondary and tertiary 22G-siRNAs. Specifically, promotes the production of 22G-siRNAs from the 5' end of target mRNAs. Together with pid-4, plays a role in small RNA-directed transgenerational epigenetic inheritance (also called RNAe) over several generations and germline immortality. Together with pid-4, plays a role in the formation of liquid-like condensates in the cytoplasm called Z granules. The sequence is that of Protein pid-5 from Caenorhabditis elegans.